The following is a 604-amino-acid chain: Sulfite reductase [NADPH] flavoprotein alpha-component (604 aa).

In terms of domain architecture, Flavodoxin-like spans 66-204 (VTVLSASQTG…AADGWTDNIA (139 aa)). FMN is bound by residues 72–77 (SQTGNA), 119–122 (STQG), and 155–164 (LGDSSYPNFC). The FAD-binding FR-type domain maps to 239-453 (ADPFPAALLA…VERNDGFRLP (215 aa)). FAD contacts are provided by residues T327, Q361, 391-394 (RLYS), 409-411 (TVG), and 424-427 (GGAS). NADP(+) is bound by residues 524 to 525 (SR), 530 to 534 (KIYVQ), and D566. Y604 contributes to the FAD binding site.

This sequence belongs to the NADPH-dependent sulphite reductase flavoprotein subunit CysJ family. It in the N-terminal section; belongs to the flavodoxin family. In the C-terminal section; belongs to the flavoprotein pyridine nucleotide cytochrome reductase family. As to quaternary structure, alpha(8)-beta(8). The alpha component is a flavoprotein, the beta component is a hemoprotein. FAD serves as cofactor. Requires FMN as cofactor.

The catalysed reaction is hydrogen sulfide + 3 NADP(+) + 3 H2O = sulfite + 3 NADPH + 4 H(+). The protein operates within sulfur metabolism; hydrogen sulfide biosynthesis; hydrogen sulfide from sulfite (NADPH route): step 1/1. Functionally, component of the sulfite reductase complex that catalyzes the 6-electron reduction of sulfite to sulfide. This is one of several activities required for the biosynthesis of L-cysteine from sulfate. The flavoprotein component catalyzes the electron flow from NADPH -&gt; FAD -&gt; FMN to the hemoprotein component. This Neisseria meningitidis serogroup A / serotype 4A (strain DSM 15465 / Z2491) protein is Sulfite reductase [NADPH] flavoprotein alpha-component.